We begin with the raw amino-acid sequence, 473 residues long: Ribulose bisphosphate carboxylase large chain (473 aa).

Residues 1-2 (MS) constitute a propeptide that is removed on maturation. Pro3 carries the post-translational modification N-acetylproline. Lys14 bears the N6,N6,N6-trimethyllysine mark. Residues Asn123 and Thr173 each coordinate substrate. The active-site Proton acceptor is Lys175. Position 177 (Lys177) interacts with substrate. Positions 201, 203, and 204 each coordinate Mg(2+). Lys201 is modified (N6-carboxylysine). His294 (proton acceptor) is an active-site residue. Arg295, His327, and Ser379 together coordinate substrate.

Belongs to the RuBisCO large chain family. Type I subfamily. Heterohexadecamer of 8 large chains and 8 small chains; disulfide-linked. The disulfide link is formed within the large subunit homodimers. The cofactor is Mg(2+). The disulfide bond which can form in the large chain dimeric partners within the hexadecamer appears to be associated with oxidative stress and protein turnover.

The protein localises to the plastid. The protein resides in the chloroplast. It carries out the reaction 2 (2R)-3-phosphoglycerate + 2 H(+) = D-ribulose 1,5-bisphosphate + CO2 + H2O. The catalysed reaction is D-ribulose 1,5-bisphosphate + O2 = 2-phosphoglycolate + (2R)-3-phosphoglycerate + 2 H(+). In terms of biological role, ruBisCO catalyzes two reactions: the carboxylation of D-ribulose 1,5-bisphosphate, the primary event in carbon dioxide fixation, as well as the oxidative fragmentation of the pentose substrate in the photorespiration process. Both reactions occur simultaneously and in competition at the same active site. This chain is Ribulose bisphosphate carboxylase large chain, found in Ajuga chamaepitys (Yellow bugle).